The following is a 782-amino-acid chain: cGMP-specific 3',5'-cyclic phosphodiesterase gamma (782 aa).

Over 1-69 (MKHMFKNILF…LCDNMYSKKY (69 aa)) the chain is Cytoplasmic. A helical transmembrane segment spans residues 70 to 90 (VILVSHLISLLLMYSVCLIVG). At 91-97 (NINDLFS) the chain is on the extracellular side. A helical transmembrane segment spans residues 98–118 (VLKLTYILLHTFTAINIILIL). Residues 119–135 (TLHATHYVEMFKSIKGE) lie on the Cytoplasmic side of the membrane. The chain crosses the membrane as a helical span at residues 136–156 (IFIFYIMMIFVIWCSWLFILF). Residues 157–181 (NNIKDLLPIVVNVNNFLYATYANNK) lie on the Extracellular side of the membrane. The chain crosses the membrane as a helical span at residues 182–202 (INIVLGFFAYLPIFYLITIIP). Residues 203–208 (CRICYS) are Cytoplasmic-facing. Residues 209-229 (CAFDILFFIMKVAIFSVYYLI) form a helical membrane-spanning segment. Residues 230-239 (TMKSYILTDN) are Extracellular-facing. The chain crosses the membrane as a helical span at residues 240 to 260 (IFMIISALVGSLFIFVIRYII). The Cytoplasmic portion of the chain corresponds to 261 to 782 (EIQRRLSFHN…YAPNLNIYKL (522 aa)). The tract at residues 376 to 396 (GSKEEPEAESESECVDESKEG) is disordered. Positions 381–390 (PEAESESECV) are enriched in acidic residues. Residues 423–751 (YEEKENEILK…SKWTKIEKDE (329 aa)) form the PDEase domain. Histidine 504 functions as the Proton donor in the catalytic mechanism. 504–508 (HNSIH) is an a nucleoside 3',5'-cyclic phosphate binding site. A divalent metal cation-binding residues include histidine 508, histidine 544, aspartate 545, and aspartate 654. Positions 545, 654, and 706 each coordinate a nucleoside 3',5'-cyclic phosphate.

The protein belongs to the cyclic nucleotide phosphodiesterase family. The cofactor is a divalent metal cation.

The protein localises to the membrane. It localises to the endoplasmic reticulum membrane. The enzyme catalyses 3',5'-cyclic GMP + H2O = GMP + H(+). Its pathway is purine metabolism; 3',5'-cyclic GMP degradation; GMP from 3',5'-cyclic GMP: step 1/1. In terms of biological role, specifically hydrolyzes the second messenger cGMP, which is a key regulator of many important physiological processes. Probably by regulating cGMP levels, required for sporozoite motility and invasion of the mosquito salivary glands. The sequence is that of cGMP-specific 3',5'-cyclic phosphodiesterase gamma from Plasmodium yoelii.